The sequence spans 290 residues: Metallo-beta-lactamase L1 type 3 (290 aa).

The N-terminal stretch at 1 to 21 is a signal peptide; that stretch reads MRSTLLAFALAVALPAAHTSA. Residues 22–33 constitute a propeptide that is removed on maturation; it reads AEVPLPQLRAYT. His105, His107, Asp109, His110, and His181 together coordinate Zn(2+). Asp205 contacts substrate. An intrachain disulfide couples Cys239 to Cys267. Residue His246 participates in Zn(2+) binding.

This sequence belongs to the metallo-beta-lactamase superfamily. Class-B beta-lactamase family. In terms of assembly, homotetramer. Requires Zn(2+) as cofactor.

It localises to the periplasm. It catalyses the reaction a beta-lactam + H2O = a substituted beta-amino acid. Its activity is regulated as follows. Inhibited by Hg(2+) or Cu(2+), and by chelating agents such as EDTA and O-phenanthroline. Reduced enzymatic activity in presence of cobalt, nickel, cadmium, and manganese. Its function is as follows. Confers resistance to the different beta-lactams antibiotics (penicillin, cephalosporin and carbapenem) via the hydrolysis of the beta-lactam ring. The sequence is that of Metallo-beta-lactamase L1 type 3 from Stenotrophomonas maltophilia (Pseudomonas maltophilia).